The following is a 104-amino-acid chain: DNA-directed RNA polymerase subunit omega (104 aa).

The segment at 76–104 is disordered; sequence IEEEKRRKEEEEKKIKEQIAKEKEDGEKI.

Belongs to the RNA polymerase subunit omega family. As to quaternary structure, the RNAP catalytic core consists of 2 alpha, 1 beta, 1 beta' and 1 omega subunit. When a sigma factor is associated with the core the holoenzyme is formed, which can initiate transcription.

The enzyme catalyses RNA(n) + a ribonucleoside 5'-triphosphate = RNA(n+1) + diphosphate. In terms of biological role, promotes RNA polymerase assembly. Latches the N- and C-terminal regions of the beta' subunit thereby facilitating its interaction with the beta and alpha subunits. This chain is DNA-directed RNA polymerase subunit omega, found in Streptococcus pneumoniae (strain CGSP14).